Reading from the N-terminus, the 431-residue chain is Enolase (431 aa).

Position 167 (glutamine 167) interacts with (2R)-2-phosphoglycerate. Glutamate 209 acts as the Proton donor in catalysis. The Mg(2+) site is built by aspartate 246, glutamate 290, and aspartate 317. Residues lysine 342, arginine 371, serine 372, and lysine 393 each contribute to the (2R)-2-phosphoglycerate site. Lysine 342 (proton acceptor) is an active-site residue.

It belongs to the enolase family. As to quaternary structure, component of the RNA degradosome, a multiprotein complex involved in RNA processing and mRNA degradation. Requires Mg(2+) as cofactor.

The protein resides in the cytoplasm. It localises to the secreted. Its subcellular location is the cell surface. The catalysed reaction is (2R)-2-phosphoglycerate = phosphoenolpyruvate + H2O. Its pathway is carbohydrate degradation; glycolysis; pyruvate from D-glyceraldehyde 3-phosphate: step 4/5. Functionally, catalyzes the reversible conversion of 2-phosphoglycerate (2-PG) into phosphoenolpyruvate (PEP). It is essential for the degradation of carbohydrates via glycolysis. The protein is Enolase of Yersinia pseudotuberculosis serotype O:1b (strain IP 31758).